We begin with the raw amino-acid sequence, 264 residues long: Cytosolic Fe-S cluster assembly factor Nubp2 homolog (264 aa).

G14–S21 contacts ATP. [4Fe-4S] cluster-binding residues include C188 and C191.

Belongs to the Mrp/NBP35 ATP-binding proteins family. NUBP2/CFD1 subfamily. Heterotetramer of 2 Nubp1 and 2 Nubp2 chains. The cofactor is [4Fe-4S] cluster.

The protein localises to the cytoplasm. Component of the cytosolic iron-sulfur (Fe/S) protein assembly (CIA) machinery. Required for maturation of extramitochondrial Fe-S proteins. The Nubp1-Nubp2 heterotetramer forms a Fe-S scaffold complex, mediating the de novo assembly of an Fe-S cluster and its transfer to target apoproteins. The protein is Cytosolic Fe-S cluster assembly factor Nubp2 homolog of Drosophila grimshawi (Hawaiian fruit fly).